Reading from the N-terminus, the 100-residue chain is Putative protein adenylyltransferase MJ0604 (100 aa).

Positions 29-43 (GSYARGDYTEESDID) match the GSX(10)DXD motif motif. Residues aspartate 41 and aspartate 43 each coordinate Mg(2+).

Belongs to the MntA antitoxin family. Mg(2+) serves as cofactor.

The catalysed reaction is L-tyrosyl-[protein] + ATP = O-(5'-adenylyl)-L-tyrosyl-[protein] + diphosphate. The enzyme catalyses O-(5'-adenylyl)-L-tyrosyl-[protein] + ATP = O-[5'-(adenylyl-(5'-&gt;3')-adenylyl)]-L-tyrosyl-[protein] + diphosphate. Its function is as follows. Putative antitoxin component of a putative type VII toxin-antitoxin (TA) system. Its cognate toxin might be MJ0605, which it might AMPylate. The sequence is that of Putative protein adenylyltransferase MJ0604 from Methanocaldococcus jannaschii (strain ATCC 43067 / DSM 2661 / JAL-1 / JCM 10045 / NBRC 100440) (Methanococcus jannaschii).